A 517-amino-acid chain; its full sequence is Transmembrane protein 180 (517 aa).

The Extracellular portion of the chain corresponds to 1–11; it reads MRLGGPWAWLL. Residues 12-43 traverse the membrane as a helical segment; it reads GLPTAVVYGSLALFVSVLHNVFLLYYVDTFVS. Over 44–55 the chain is Cytoplasmic; it reads VYKIDKAAFWVG. Residues 56-74 form a helical membrane-spanning segment; sequence ETVFLLWNSLNDPLFGWLS. Topologically, residues 75-100 are extracellular; that stretch reads DRQFLSSQPRSGAGLSSRAVVLARVR. Residues 101-118 form a helical membrane-spanning segment; sequence ALGWHGPLLALSFLAFWV. Residues 119 to 126 are Cytoplasmic-facing; that stretch reads PWAPAGLQ. Residues 127 to 151 form a helical membrane-spanning segment; sequence FLLCLCLYDGFLTLVDLHHHALLAD. Topologically, residues 152-155 are extracellular; that stretch reads LALS. The chain crosses the membrane as a helical span at residues 156–179; the sequence is AHDRTHLNFYCSLFSAAGSLSVFA. Topologically, residues 180-191 are cytoplasmic; it reads SYAFWNKEDFSS. Residues 192-223 traverse the membrane as a helical segment; the sequence is FRAFCLALATGSGLGFVGAARLLRRRVEAAGR. Residues 224–264 lie on the Extracellular side of the membrane; that stretch reads EPGCPAMAVNDGLCEEELLVGGEEAGSITLGQYLQQLARHR. Residues 265–292 form a helical membrane-spanning segment; that stretch reads NFLWFVGMDLVQVFHCHFNSNFFPLFLE. Residues 293-305 lie on the Cytoplasmic side of the membrane; the sequence is HLLSDHISLSTGS. A helical transmembrane segment spans residues 306–325; it reads FLLGISYVAPHLNNLYFLPL. Residues 326–330 lie on the Extracellular side of the membrane; that stretch reads CRRWG. The chain crosses the membrane as a helical span at residues 331-350; it reads VYAVVRGLFLLKLGLSLLML. At 351–358 the chain is on the cytoplasmic side; that stretch reads LAGPDHPG. The helical transmembrane segment at 359–393 threads the bilayer; the sequence is LLCLFIASNRVFTEGTCKLLTLVVTDLVDEDLVLN. The Extracellular portion of the chain corresponds to 394–402; the sequence is HRKQAASAL. The helical transmembrane segment at 403–429 threads the bilayer; the sequence is LFGMVALVTKPGQTFAPLLGTWLLCFY. Topologically, residues 430–466 are cytoplasmic; the sequence is TGHDLFQQHPPAPVGSAQPWPEPPAPPPAQAPPLRQG. The helical transmembrane segment at 467–485 threads the bilayer; sequence CFYLLVLVPIACALLQLFT. The Extracellular portion of the chain corresponds to 486–517; sequence WSQFTLHGRRLHMVKAQRQSLSRAQTLDVKMV.

It localises to the cell membrane. This chain is Transmembrane protein 180, found in Bos taurus (Bovine).